An 891-amino-acid polypeptide reads, in one-letter code: Mating-type protein A-alpha Z3 (891 aa).

The homeobox; TALE-type DNA-binding region spans 111 to 189; it reads EWQENMPPVP…AARIRIGWTH (79 aa). The segment covering 331-360 has biased composition (basic and acidic residues); that stretch reads AAHEKRQQARREQRQAKNERDAAQMREEQR. 4 disordered regions span residues 331–592, 606–671, 779–812, and 836–861; these read AAHE…VNWD, YLDS…ASET, SILSTGPKAGITRRQTPPAKRRVSPRAQEPVEPS, and PKKDRRYAERAERRASKANSFDSPDT. 2 stretches are compositionally biased toward acidic residues: residues 369-400 and 427-457; these read SSDDEGEDEDDEESTDAYDSEASDSEDDSDSD and ADDEDEASDDDEDDNVEGDDESEEEEEEEDT. 2 stretches are compositionally biased toward low complexity: residues 542–559 and 612–650; these read PSKTTKAPASTSTTKSST and SSRPQRRASTSSSSSTSSSLSRTPSLTSLSSLSSGSSVS. The segment covering 651 to 660 has biased composition (polar residues); that stretch reads TCETVGTDSS. A compositionally biased stretch (basic and acidic residues) spans 841-850; it reads RYAERAERRA.

The protein belongs to the TALE/M-ATYP homeobox family.

It is found in the nucleus. Specifies A-alpha-3 mating-type. May regulate the expression of genes specific to the homokaryotic cell type. This is Mating-type protein A-alpha Z3 from Schizophyllum commune (Split gill fungus).